We begin with the raw amino-acid sequence, 494 residues long: MLSLNQLTEVMKVANKKREKFREMEHRFYHCCKKCSQAIGVFEENQETYKVVAMMCLDQVGIPVKTDTEKESTMLEFIRFFDNPRAAIKIPDRIVELTKEHMDDKEFLIDAVHNGRVKHSTVEMTKKKKADLLEVLMDPGKNNKKEDGDDPTLFFSINDMDQLLEGDDIIDMEEECEGDEDDVNAKGYDDLYDKKQKELYKKIETGMITVVRLHEMCNDLGIGDYFELILSATEFPCVICDLSILYEFRACFFDLINMSRMAASKVNLNRIKKPGKLFSKAIKNKTNAGCKPLVKGQFLGEKTELEITKRLDEVELTPKQLVDYSIFKCLGGGEDMMKTMAQLDKNNKMEDYGYNFFAEEISPPVLLRCMEGEWLDKFPFMRSIIDRIKDVALSHALPRKRIFCYINPRIMACECNIYETVRSRCLLGVKISLVNTMLKVMKRSQTKTILNQVSSICKEHGIAYEICNIHINKTMKEDKKIIKERLARKRSHPN.

This is an uncharacterized protein from Magallana gigas (Pacific oyster).